Consider the following 247-residue polypeptide: NAD-dependent protein deacetylase (247 aa).

In terms of domain architecture, Deacetylase sirtuin-type spans 1–247 (METFKSILHE…EFARSLGMKK (247 aa)). Positions 20, 24, 31, 32, 100, 102, 103, and 118 each coordinate NAD(+). Residue Phe-31 coordinates nicotinamide. Residues Ile-102 and Asp-103 each coordinate nicotinamide. His-118 serves as the catalytic Proton acceptor. Zn(2+) contacts are provided by Cys-126, Cys-129, Cys-146, and Cys-156. NAD(+) contacts are provided by Thr-192, Ser-193, Asn-218, and Ile-236.

Belongs to the sirtuin family. Class U subfamily. Zn(2+) is required as a cofactor.

The protein localises to the cytoplasm. The enzyme catalyses N(6)-acetyl-L-lysyl-[protein] + NAD(+) + H2O = 2''-O-acetyl-ADP-D-ribose + nicotinamide + L-lysyl-[protein]. Functionally, NAD-dependent protein deacetylase which modulates the activities of several enzymes which are inactive in their acetylated form. The polypeptide is NAD-dependent protein deacetylase (Bacillus subtilis (strain 168)).